A 489-amino-acid polypeptide reads, in one-letter code: UDP-N-acetylmuramoyl-L-alanyl-D-glutamate--2,6-diaminopimelate ligase (489 aa).

A UDP-N-acetyl-alpha-D-muramoyl-L-alanyl-D-glutamate-binding site is contributed by serine 30. 110-116 is a binding site for ATP; that stretch reads GTNGKTT. Residues 152 to 153, serine 179, and arginine 187 contribute to the UDP-N-acetyl-alpha-D-muramoyl-L-alanyl-D-glutamate site; that span reads TT. An N6-carboxylysine modification is found at lysine 219. Meso-2,6-diaminopimelate is bound by residues arginine 381, 405 to 408, glycine 458, and glutamate 462; that span reads DNPR. The Meso-diaminopimelate recognition motif motif lies at 405-408; that stretch reads DNPR.

It belongs to the MurCDEF family. MurE subfamily. Requires Mg(2+) as cofactor. In terms of processing, carboxylation is probably crucial for Mg(2+) binding and, consequently, for the gamma-phosphate positioning of ATP.

The protein resides in the cytoplasm. It catalyses the reaction UDP-N-acetyl-alpha-D-muramoyl-L-alanyl-D-glutamate + meso-2,6-diaminopimelate + ATP = UDP-N-acetyl-alpha-D-muramoyl-L-alanyl-gamma-D-glutamyl-meso-2,6-diaminopimelate + ADP + phosphate + H(+). It functions in the pathway cell wall biogenesis; peptidoglycan biosynthesis. Its function is as follows. Catalyzes the addition of meso-diaminopimelic acid to the nucleotide precursor UDP-N-acetylmuramoyl-L-alanyl-D-glutamate (UMAG) in the biosynthesis of bacterial cell-wall peptidoglycan. This chain is UDP-N-acetylmuramoyl-L-alanyl-D-glutamate--2,6-diaminopimelate ligase, found in Syntrophomonas wolfei subsp. wolfei (strain DSM 2245B / Goettingen).